Reading from the N-terminus, the 230-residue chain is MTKTTTCLYHFVVLNWYIFLNYYIPQIGKDEEKLKEFHDGGRSKYLTLLNLLLQAVFFGVACLDDVLKRVIGRKDIKFITYFRDLLFTTLAFPLSTFVFLVFWSLFHYDRSLVYPKGLDDFFPAWVNHAMHTSIFPFSLAETVLRPHNYPSKKLGLSLLGACNFAYIIRILWRYVQTGNWVYPVFASLSPLGIILFFSASYILSASLYLFGEKINHWKWGATVKPRMKKN.

Residues 1–7 (MTKTTTC) are Cytoplasmic-facing. Residues 8-28 (LYHFVVLNWYIFLNYYIPQIG) traverse the membrane as a helical segment. At 29 to 45 (KDEEKLKEFHDGGRSKY) the chain is on the extracellular side. Residues 46-66 (LTLLNLLLQAVFFGVACLDDV) form a helical membrane-spanning segment. The Cytoplasmic portion of the chain corresponds to 67–85 (LKRVIGRKDIKFITYFRDL). The chain crosses the membrane as a helical span at residues 86–106 (LFTTLAFPLSTFVFLVFWSLF). The Extracellular portion of the chain corresponds to 107-120 (HYDRSLVYPKGLDD). The helical transmembrane segment at 121–141 (FFPAWVNHAMHTSIFPFSLAE) threads the bilayer. Over 142–155 (TVLRPHNYPSKKLG) the chain is Cytoplasmic. A helical transmembrane segment spans residues 156-173 (LSLLGACNFAYIIRILWR). The Extracellular portion of the chain corresponds to 174-190 (YVQTGNWVYPVFASLSP). The helical transmembrane segment at 191 to 211 (LGIILFFSASYILSASLYLFG) threads the bilayer. Over 212–230 (EKINHWKWGATVKPRMKKN) the chain is Cytoplasmic.

Belongs to the AIG1 family.

It is found in the cell membrane. It catalyses the reaction 9-hexadecanoyloxy-octadecanoate + H2O = 9-hydroxy-octadecanoate + hexadecanoate + H(+). It carries out the reaction 12-hexadecanoyloxy-octadecanoate + H2O = 12-hydroxyoctadecanoate + hexadecanoate + H(+). The catalysed reaction is 9-(9Z-hexadecenoyloxy)-octadecanoate + H2O = (9Z)-hexadecenoate + 9-hydroxy-octadecanoate + H(+). The enzyme catalyses 12-(9Z-hexadecenoyloxy)-octadecanoate + H2O = 12-hydroxyoctadecanoate + (9Z)-hexadecenoate + H(+). It catalyses the reaction 13-(9Z-hexadecenoyloxy)-octadecanoate + H2O = 13-hydroxy-octadecanoate + (9Z)-hexadecenoate + H(+). It carries out the reaction 9-octadecanoyloxy-octadecanoate + H2O = 9-hydroxy-octadecanoate + octadecanoate + H(+). The catalysed reaction is 12-octadecanoyloxy-octadecanoate + H2O = 12-hydroxyoctadecanoate + octadecanoate + H(+). The enzyme catalyses 13-octadecanoyloxy-octadecanoate + H2O = 13-hydroxy-octadecanoate + octadecanoate + H(+). It catalyses the reaction 9-(9Z-octadecenoyloxy)-octadecanoate + H2O = 9-hydroxy-octadecanoate + (9Z)-octadecenoate + H(+). It carries out the reaction 12-(9Z-octadecenoyloxy)-octadecanoate + H2O = 12-hydroxyoctadecanoate + (9Z)-octadecenoate + H(+). The catalysed reaction is 13-(9Z-octadecenoyloxy)-octadecanoate + H2O = 13-hydroxy-octadecanoate + (9Z)-octadecenoate + H(+). The enzyme catalyses 5-(9Z-octadecenoyloxy)-octadecanoate + H2O = 5-hydroxy-octadecanoate + (9Z)-octadecenoate + H(+). Hydrolyzes bioactive fatty-acid esters of hydroxy-fatty acids (FAHFAs), but not other major classes of lipids. Shows a preference for FAHFAs with branching distal from the carboxylate head group of the lipids. Regulates the expression and the cell-associated anticoagulant activity of the inhibitor TFPI in endothelial cells (in vitro). In Rattus norvegicus (Rat), this protein is Androgen-dependent TFPI-regulating protein (Adtrp).